Reading from the N-terminus, the 313-residue chain is tRNA dimethylallyltransferase (313 aa).

ATP is bound at residue 10-17 (GPTAVGKT). 12-17 (TAVGKT) contributes to the substrate binding site. Residues 35-38 (DSMQ) are interaction with substrate tRNA.

Belongs to the IPP transferase family. As to quaternary structure, monomer. The cofactor is Mg(2+).

The catalysed reaction is adenosine(37) in tRNA + dimethylallyl diphosphate = N(6)-dimethylallyladenosine(37) in tRNA + diphosphate. Catalyzes the transfer of a dimethylallyl group onto the adenine at position 37 in tRNAs that read codons beginning with uridine, leading to the formation of N6-(dimethylallyl)adenosine (i(6)A). The protein is tRNA dimethylallyltransferase of Alkaliphilus oremlandii (strain OhILAs) (Clostridium oremlandii (strain OhILAs)).